Here is a 482-residue protein sequence, read N- to C-terminus: Alanine aminotransferase 2 (482 aa).

Lysine 299 carries the N6-(pyridoxal phosphate)lysine modification.

It belongs to the class-I pyridoxal-phosphate-dependent aminotransferase family. Alanine aminotransferase subfamily. Homodimer. Pyridoxal 5'-phosphate is required as a cofactor. In terms of processing, the N-terminus is blocked. As to expression, mesophyll and bundle sheath cells.

The catalysed reaction is L-alanine + 2-oxoglutarate = pyruvate + L-glutamate. It participates in photosynthesis; C4 acid pathway. Its pathway is amino-acid degradation; L-alanine degradation via transaminase pathway; pyruvate from L-alanine: step 1/1. Its function is as follows. Transfer of C3 units between the cytosol of mesophyll and bundle sheath cells to maintain a nitrogen-carbon balance in the C4-dicarboxylic pathway. The protein is Alanine aminotransferase 2 of Panicum miliaceum (Proso millet).